Here is a 124-residue protein sequence, read N- to C-terminus: NADPH-dependent 7-cyano-7-deazaguanine reductase (124 aa).

The active-site Thioimide intermediate is the C40. D47 serves as the catalytic Proton donor. Residues 62–64 and 81–82 contribute to the substrate site; these read VEL and HE.

Belongs to the GTP cyclohydrolase I family. QueF type 1 subfamily.

The protein localises to the cytoplasm. The enzyme catalyses 7-aminomethyl-7-carbaguanine + 2 NADP(+) = 7-cyano-7-deazaguanine + 2 NADPH + 3 H(+). The protein operates within tRNA modification; tRNA-queuosine biosynthesis. Functionally, catalyzes the NADPH-dependent reduction of 7-cyano-7-deazaguanine (preQ0) to 7-aminomethyl-7-deazaguanine (preQ1). The chain is NADPH-dependent 7-cyano-7-deazaguanine reductase from Wolinella succinogenes (strain ATCC 29543 / DSM 1740 / CCUG 13145 / JCM 31913 / LMG 7466 / NCTC 11488 / FDC 602W) (Vibrio succinogenes).